The sequence spans 614 residues: Dihydroxy-acid dehydratase (614 aa).

Residue aspartate 81 participates in Mg(2+) binding. Cysteine 122 provides a ligand contact to [2Fe-2S] cluster. Aspartate 123 and lysine 124 together coordinate Mg(2+). Lysine 124 is subject to N6-carboxylysine. Residue cysteine 193 participates in [2Fe-2S] cluster binding. Glutamate 489 contacts Mg(2+). Serine 515 functions as the Proton acceptor in the catalytic mechanism.

It belongs to the IlvD/Edd family. In terms of assembly, homodimer. It depends on [2Fe-2S] cluster as a cofactor. Mg(2+) is required as a cofactor.

It carries out the reaction (2R)-2,3-dihydroxy-3-methylbutanoate = 3-methyl-2-oxobutanoate + H2O. The enzyme catalyses (2R,3R)-2,3-dihydroxy-3-methylpentanoate = (S)-3-methyl-2-oxopentanoate + H2O. The protein operates within amino-acid biosynthesis; L-isoleucine biosynthesis; L-isoleucine from 2-oxobutanoate: step 3/4. Its pathway is amino-acid biosynthesis; L-valine biosynthesis; L-valine from pyruvate: step 3/4. Functions in the biosynthesis of branched-chain amino acids. Catalyzes the dehydration of (2R,3R)-2,3-dihydroxy-3-methylpentanoate (2,3-dihydroxy-3-methylvalerate) into 2-oxo-3-methylpentanoate (2-oxo-3-methylvalerate) and of (2R)-2,3-dihydroxy-3-methylbutanoate (2,3-dihydroxyisovalerate) into 2-oxo-3-methylbutanoate (2-oxoisovalerate), the penultimate precursor to L-isoleucine and L-valine, respectively. In Saccharophagus degradans (strain 2-40 / ATCC 43961 / DSM 17024), this protein is Dihydroxy-acid dehydratase.